The sequence spans 173 residues: Lens fiber membrane intrinsic protein (173 aa).

Topologically, residues 1–3 (MYS) are cytoplasmic. A helical membrane pass occupies residues 4 to 24 (FMGGGLFCAWVGTILLVVATA). At 25–66 (TDHWMQYRLSGSFAHQGLWRYCLGNKCFLQTESIAYWNATRA) the chain is on the extracellular side. Residues W43 and W61 are each glycosylated (C-linked (Man) tryptophan). N-linked (GlcNAc...) asparagine glycosylation occurs at N62. Residues 67–87 (FMILSALCATSGIIMGVLAFA) form a helical membrane-spanning segment. Topologically, residues 88-98 (QQSTFTRLSRP) are cytoplasmic. The chain crosses the membrane as a helical span at residues 99 to 119 (FSAGIMFFASTLFVLLALAIY). Residues 120-140 (TGVTVSFLGRRFGDWRFSWSY) are Extracellular-facing. The chain crosses the membrane as a helical span at residues 141 to 161 (ILGWVALLMTFFAGIFYMCAY). Residues 162–173 (RMHECRRLSTPR) lie on the Cytoplasmic side of the membrane. S170 is modified (phosphoserine). T171 bears the Phosphothreonine mark.

This sequence belongs to the PMP-22/EMP/MP20 family. As to quaternary structure, seems to be associated with itself or another lens membrane component via disulfide bonds. Eye lens specific.

Its subcellular location is the membrane. Present in the thicker 16-17 nm junctions of mammalian lens fiber cells, where it may contribute to cell junctional organization. Acts as a receptor for calmodulin. May play an important role in both lens development and cataractogenesis. The polypeptide is Lens fiber membrane intrinsic protein (Lim2) (Rattus norvegicus (Rat)).